The chain runs to 411 residues: 2,3-bisphosphoglycerate-independent phosphoglycerate mutase (411 aa).

Belongs to the BPG-independent phosphoglycerate mutase family. A-PGAM subfamily.

It carries out the reaction (2R)-2-phosphoglycerate = (2R)-3-phosphoglycerate. It participates in carbohydrate degradation; glycolysis; pyruvate from D-glyceraldehyde 3-phosphate: step 3/5. In terms of biological role, catalyzes the interconversion of 2-phosphoglycerate and 3-phosphoglycerate. The protein is 2,3-bisphosphoglycerate-independent phosphoglycerate mutase of Thermococcus gammatolerans (strain DSM 15229 / JCM 11827 / EJ3).